A 396-amino-acid polypeptide reads, in one-letter code: NASP-related protein sim3 (396 aa).

A disordered region spans residues 1-31 (MSSDTKTLENSKGNSATDADTKNPSSSDSRA). TPR repeat units lie at residues 32 to 65 (IEQL…SESI) and 89 to 122 (IENS…GSFT). Residues 135-164 (NEENSSIAHPEKESEEKETNEASPASEEDE) are disordered. A compositionally biased stretch (basic and acidic residues) spans 143 to 154 (HPEKESEEKETN). Residues 199-232 (ADIYDLLGELSLEIENFSQASQDLKTALEWKEKV) form a TPR 3 repeat. The stretch at 267–329 (CEHVEKAAEI…QKTLDLKHGA (63 aa)) forms a coiled coil. The span at 284–301 (RENEVTDKKGKGKQKAEE) shows a compositional bias: basic and acidic residues. Disordered regions lie at residues 284 to 307 (RENE…LTSD) and 334 to 396 (EAVM…KKKD). Low complexity predominate over residues 343-353 (SSLLSKDSSSL).

Belongs to the NASP family. Interacts with cnp1, hht1, hht2 and hht3; has a preference for CENP-A (cnp1) over histone H3 (hht1/2/3).

It localises to the nucleus. Functionally, histone H3 and H3-like CENP-A-specific chaperone. Promotes delivery and incorporation of CENP-A in centromeric chromatin, probably by escorting nascent CENP-A to CENP-A chromatin assembly factors. Required for central core silencing and normal chromosome segregation. The sequence is that of NASP-related protein sim3 (sim3) from Schizosaccharomyces pombe (strain 972 / ATCC 24843) (Fission yeast).